The chain runs to 351 residues: Protein-glutamate methylesterase/protein-glutamine glutaminase (351 aa).

Residues 8–125 form the Response regulatory domain; it reads TVVVVDDSLT…GEDPFAGLGD (118 aa). The residue at position 59 (Asp-59) is a 4-aspartylphosphate. Positions 151–345 constitute a CheB-type methylesterase domain; that stretch reads PKIGTVVGIG…PAILNLCERR (195 aa). Active-site residues include Ser-162, His-188, and Asp-287.

This sequence belongs to the CheB family. Post-translationally, phosphorylated by CheA. Phosphorylation of the N-terminal regulatory domain activates the methylesterase activity.

It localises to the cytoplasm. The catalysed reaction is [protein]-L-glutamate 5-O-methyl ester + H2O = L-glutamyl-[protein] + methanol + H(+). It catalyses the reaction L-glutaminyl-[protein] + H2O = L-glutamyl-[protein] + NH4(+). Its function is as follows. Involved in chemotaxis. Part of a chemotaxis signal transduction system that modulates chemotaxis in response to various stimuli. Catalyzes the demethylation of specific methylglutamate residues introduced into the chemoreceptors (methyl-accepting chemotaxis proteins or MCP) by CheR. Also mediates the irreversible deamidation of specific glutamine residues to glutamic acid. The protein is Protein-glutamate methylesterase/protein-glutamine glutaminase of Gluconobacter oxydans (strain 621H) (Gluconobacter suboxydans).